The sequence spans 79 residues: ATP synthase subunit c (79 aa).

Transmembrane regions (helical) follow at residues isoleucine 11–leucine 31 and isoleucine 55–isoleucine 75.

This sequence belongs to the ATPase C chain family. F-type ATPases have 2 components, F(1) - the catalytic core - and F(0) - the membrane proton channel. F(1) has five subunits: alpha(3), beta(3), gamma(1), delta(1), epsilon(1). F(0) has three main subunits: a(1), b(2) and c(10-14). The alpha and beta chains form an alternating ring which encloses part of the gamma chain. F(1) is attached to F(0) by a central stalk formed by the gamma and epsilon chains, while a peripheral stalk is formed by the delta and b chains.

Its subcellular location is the cell membrane. F(1)F(0) ATP synthase produces ATP from ADP in the presence of a proton or sodium gradient. F-type ATPases consist of two structural domains, F(1) containing the extramembraneous catalytic core and F(0) containing the membrane proton channel, linked together by a central stalk and a peripheral stalk. During catalysis, ATP synthesis in the catalytic domain of F(1) is coupled via a rotary mechanism of the central stalk subunits to proton translocation. In terms of biological role, key component of the F(0) channel; it plays a direct role in translocation across the membrane. A homomeric c-ring of between 10-14 subunits forms the central stalk rotor element with the F(1) delta and epsilon subunits. The sequence is that of ATP synthase subunit c from Wigglesworthia glossinidia brevipalpis.